The primary structure comprises 233 residues: Cytochrome c biogenesis ATP-binding export protein CcmA (233 aa).

Residues 17–233 (FAGEDLLCVR…AAGLFLEDEG (217 aa)) form the ABC transporter domain. Position 49-56 (49-56 (GPNGSGKS)) interacts with ATP.

It belongs to the ABC transporter superfamily. CcmA exporter (TC 3.A.1.107) family. As to quaternary structure, the complex is composed of two ATP-binding proteins (CcmA) and two transmembrane proteins (CcmB).

The protein localises to the cell inner membrane. It carries out the reaction heme b(in) + ATP + H2O = heme b(out) + ADP + phosphate + H(+). Its function is as follows. Part of the ABC transporter complex CcmAB involved in the biogenesis of c-type cytochromes; once thought to export heme, this seems not to be the case, but its exact role is uncertain. Responsible for energy coupling to the transport system. This chain is Cytochrome c biogenesis ATP-binding export protein CcmA, found in Rhodospirillum rubrum (strain ATCC 11170 / ATH 1.1.1 / DSM 467 / LMG 4362 / NCIMB 8255 / S1).